We begin with the raw amino-acid sequence, 429 residues long: Histidine--tRNA ligase (429 aa).

It belongs to the class-II aminoacyl-tRNA synthetase family. Homodimer.

The protein resides in the cytoplasm. The catalysed reaction is tRNA(His) + L-histidine + ATP = L-histidyl-tRNA(His) + AMP + diphosphate + H(+). This Oceanobacillus iheyensis (strain DSM 14371 / CIP 107618 / JCM 11309 / KCTC 3954 / HTE831) protein is Histidine--tRNA ligase.